Reading from the N-terminus, the 243-residue chain is MSTNVTMRQMLEAGVHFGHQTRFWNPKMAKYIFGSRNKIHIINLEKTLPLFVEAQEYVRRLAANKGTVMFVGTKRQAREIVREEAARCGMPFVDHRWLGGMLTNYKTVKQSIKRLEEKRAILEGAGETGYNKKELLDLQREVEKLERSLGGIKDMKGLPDAIFVIDTGYQKGTIVEAKKLGIPVIGVVDTNNSPDGIDYVVPGNDDSSRAIRLYARGIADAVLEGRAHSLQEIVAAAETAQAE.

Belongs to the universal ribosomal protein uS2 family.

The sequence is that of Small ribosomal subunit protein uS2 from Chromobacterium violaceum (strain ATCC 12472 / DSM 30191 / JCM 1249 / CCUG 213 / NBRC 12614 / NCIMB 9131 / NCTC 9757 / MK).